Reading from the N-terminus, the 196-residue chain is Peptidyl-tRNA hydrolase (196 aa).

Y21 contributes to the tRNA binding site. H26 functions as the Proton acceptor in the catalytic mechanism. TRNA is bound by residues F72, N74, and N120.

This sequence belongs to the PTH family. In terms of assembly, monomer.

It localises to the cytoplasm. The enzyme catalyses an N-acyl-L-alpha-aminoacyl-tRNA + H2O = an N-acyl-L-amino acid + a tRNA + H(+). In terms of biological role, hydrolyzes ribosome-free peptidyl-tRNAs (with 1 or more amino acids incorporated), which drop off the ribosome during protein synthesis, or as a result of ribosome stalling. Its function is as follows. Catalyzes the release of premature peptidyl moieties from peptidyl-tRNA molecules trapped in stalled 50S ribosomal subunits, and thus maintains levels of free tRNAs and 50S ribosomes. This is Peptidyl-tRNA hydrolase from Mycobacteroides abscessus (strain ATCC 19977 / DSM 44196 / CCUG 20993 / CIP 104536 / JCM 13569 / NCTC 13031 / TMC 1543 / L948) (Mycobacterium abscessus).